The sequence spans 418 residues: Probable serine hydroxymethyltransferase (418 aa).

Residues Leu118 and 122 to 124 contribute to the (6S)-5,6,7,8-tetrahydrofolate site; that span reads GHL. Lys226 carries the N6-(pyridoxal phosphate)lysine modification. (6S)-5,6,7,8-tetrahydrofolate is bound at residue 351–353; that stretch reads SPF.

It belongs to the SHMT family. In terms of assembly, homodimer. Pyridoxal 5'-phosphate is required as a cofactor.

Its subcellular location is the cytoplasm. It catalyses the reaction (6R)-5,10-methylene-5,6,7,8-tetrahydrofolate + glycine + H2O = (6S)-5,6,7,8-tetrahydrofolate + L-serine. Its pathway is one-carbon metabolism; tetrahydrofolate interconversion. Functionally, catalyzes the reversible interconversion of serine and glycine with tetrahydrofolate (THF) serving as the one-carbon carrier. This reaction serves as the major source of one-carbon groups required for the biosynthesis of purines, thymidylate, methionine, and other important biomolecules. This Mesomycoplasma hyopneumoniae (strain J / ATCC 25934 / NCTC 10110) (Mycoplasma hyopneumoniae) protein is Probable serine hydroxymethyltransferase.